The following is a 291-amino-acid chain: Formamidopyrimidine-DNA glycosylase (291 aa).

P2 functions as the Schiff-base intermediate with DNA in the catalytic mechanism. Residue E3 is the Proton donor of the active site. K58 serves as the catalytic Proton donor; for beta-elimination activity. DNA contacts are provided by H100, R123, and K166. The FPG-type zinc finger occupies 257–291; it reads SVYGREGKECFQCGIPITRISQSGRSSFYCSQCQK. The active-site Proton donor; for delta-elimination activity is the R281.

This sequence belongs to the FPG family. Monomer. Zn(2+) serves as cofactor.

The enzyme catalyses Hydrolysis of DNA containing ring-opened 7-methylguanine residues, releasing 2,6-diamino-4-hydroxy-5-(N-methyl)formamidopyrimidine.. It carries out the reaction 2'-deoxyribonucleotide-(2'-deoxyribose 5'-phosphate)-2'-deoxyribonucleotide-DNA = a 3'-end 2'-deoxyribonucleotide-(2,3-dehydro-2,3-deoxyribose 5'-phosphate)-DNA + a 5'-end 5'-phospho-2'-deoxyribonucleoside-DNA + H(+). In terms of biological role, involved in base excision repair of DNA damaged by oxidation or by mutagenic agents. Acts as a DNA glycosylase that recognizes and removes damaged bases. Has a preference for oxidized purines, such as 7,8-dihydro-8-oxoguanine (8-oxoG). Has AP (apurinic/apyrimidinic) lyase activity and introduces nicks in the DNA strand. Cleaves the DNA backbone by beta-delta elimination to generate a single-strand break at the site of the removed base with both 3'- and 5'-phosphates. In Bartonella quintana (strain Toulouse) (Rochalimaea quintana), this protein is Formamidopyrimidine-DNA glycosylase.